A 194-amino-acid chain; its full sequence is Large ribosomal subunit protein bL9 (194 aa).

It belongs to the bacterial ribosomal protein bL9 family.

Functionally, binds to the 23S rRNA. The polypeptide is Large ribosomal subunit protein bL9 (Rhodopseudomonas palustris (strain BisA53)).